A 95-amino-acid polypeptide reads, in one-letter code: Aspartyl/glutamyl-tRNA(Asn/Gln) amidotransferase subunit C (95 aa).

Belongs to the GatC family. In terms of assembly, heterotrimer of A, B and C subunits.

It catalyses the reaction L-glutamyl-tRNA(Gln) + L-glutamine + ATP + H2O = L-glutaminyl-tRNA(Gln) + L-glutamate + ADP + phosphate + H(+). The catalysed reaction is L-aspartyl-tRNA(Asn) + L-glutamine + ATP + H2O = L-asparaginyl-tRNA(Asn) + L-glutamate + ADP + phosphate + 2 H(+). In terms of biological role, allows the formation of correctly charged Asn-tRNA(Asn) or Gln-tRNA(Gln) through the transamidation of misacylated Asp-tRNA(Asn) or Glu-tRNA(Gln) in organisms which lack either or both of asparaginyl-tRNA or glutaminyl-tRNA synthetases. The reaction takes place in the presence of glutamine and ATP through an activated phospho-Asp-tRNA(Asn) or phospho-Glu-tRNA(Gln). The chain is Aspartyl/glutamyl-tRNA(Asn/Gln) amidotransferase subunit C from Bartonella quintana (strain Toulouse) (Rochalimaea quintana).